The sequence spans 209 residues: Uracil phosphoribosyltransferase (209 aa).

5-phospho-alpha-D-ribose 1-diphosphate contacts are provided by residues Arg79, Arg104, and 131 to 139 (DPMLATGGS). Uracil-binding positions include Ile194 and 199–201 (GDA). Asp200 lines the 5-phospho-alpha-D-ribose 1-diphosphate pocket.

It belongs to the UPRTase family. Requires Mg(2+) as cofactor.

The catalysed reaction is UMP + diphosphate = 5-phospho-alpha-D-ribose 1-diphosphate + uracil. The protein operates within pyrimidine metabolism; UMP biosynthesis via salvage pathway; UMP from uracil: step 1/1. With respect to regulation, allosterically activated by GTP. In terms of biological role, catalyzes the conversion of uracil and 5-phospho-alpha-D-ribose 1-diphosphate (PRPP) to UMP and diphosphate. The protein is Uracil phosphoribosyltransferase of Brevibacillus brevis (strain 47 / JCM 6285 / NBRC 100599).